We begin with the raw amino-acid sequence, 370 residues long: Queuine tRNA-ribosyltransferase (370 aa).

The active-site Proton acceptor is the D93. Substrate is bound by residues 93 to 97 (DSGGF), D147, Q189, and G216. Residues 247–253 (GVGSPDC) form an RNA binding region. D266 (nucleophile) is an active-site residue. The tract at residues 271-275 (TRIAR) is RNA binding; important for wobble base 34 recognition. 4 residues coordinate Zn(2+): C304, C306, C309, and H335.

The protein belongs to the queuine tRNA-ribosyltransferase family. In terms of assembly, homodimer. Within each dimer, one monomer is responsible for RNA recognition and catalysis, while the other monomer binds to the replacement base PreQ1. Zn(2+) is required as a cofactor.

It catalyses the reaction 7-aminomethyl-7-carbaguanine + guanosine(34) in tRNA = 7-aminomethyl-7-carbaguanosine(34) in tRNA + guanine. It participates in tRNA modification; tRNA-queuosine biosynthesis. Catalyzes the base-exchange of a guanine (G) residue with the queuine precursor 7-aminomethyl-7-deazaguanine (PreQ1) at position 34 (anticodon wobble position) in tRNAs with GU(N) anticodons (tRNA-Asp, -Asn, -His and -Tyr). Catalysis occurs through a double-displacement mechanism. The nucleophile active site attacks the C1' of nucleotide 34 to detach the guanine base from the RNA, forming a covalent enzyme-RNA intermediate. The proton acceptor active site deprotonates the incoming PreQ1, allowing a nucleophilic attack on the C1' of the ribose to form the product. After dissociation, two additional enzymatic reactions on the tRNA convert PreQ1 to queuine (Q), resulting in the hypermodified nucleoside queuosine (7-(((4,5-cis-dihydroxy-2-cyclopenten-1-yl)amino)methyl)-7-deazaguanosine). The polypeptide is Queuine tRNA-ribosyltransferase (Pelotomaculum thermopropionicum (strain DSM 13744 / JCM 10971 / SI)).